The following is a 982-amino-acid chain: Glutamate [NMDA] receptor subunit 1 (982 aa).

A signal peptide spans 1 to 16 (MAFAVWFLSTFVIVAA). The Extracellular portion of the chain corresponds to 17–561 (QRHMALEHEG…TLVSFLQPFS (545 aa)). N247, N303, N334, N386, N443, N470, and N490 each carry an N-linked (GlcNAc...) asparagine glycan. Glycine-binding positions include 518 to 520 (PLT) and R525. A helical transmembrane segment spans residues 562-582 (NTLWILVMVSVHVVALVLYLL). Residues 583 to 639 (DRFSPFGRFKLSHSDSNEEKALNLSSAVWFAWGVLLNSGIGEGTPRSFSARVLGMVW) are Cytoplasmic-facing. A helical transmembrane segment spans residues 640–660 (AGFAMIIVASYTANLAAFLVL). Residues 661–819 (ERPKTKLSGI…KTPNTLGLKN (159 aa)) lie on the Extracellular side of the membrane. Residue N681 is glycosylated (N-linked (GlcNAc...) asparagine). The glycine site is built by S691 and D735. The helical transmembrane segment at 820–840 (MAGVFILVGVGIAGGVGLIII) threads the bilayer. Residues 841 to 982 (EVIYKKHQVK…YTSDVSHLVV (142 aa)) are Cytoplasmic-facing. A disordered region spans residues 934–982 (EIGKPGQSPKVIGGPPHPMLGKTRPQAQQNLLPPRYSPGYTSDVSHLVV). Residues 972 to 982 (GYTSDVSHLVV) are compositionally biased toward polar residues.

The protein belongs to the glutamate-gated ion channel (TC 1.A.10.1) family. As to quaternary structure, forms a heteromeric NMDA channel with Nmdar2.

It localises to the cell membrane. It is found in the postsynaptic cell membrane. The protein resides in the postsynaptic density. Functionally, NMDA receptor subtype of glutamate-gated ion channels with high calcium permeability and voltage-dependent sensitivity to magnesium. Mediated by glycine. This protein plays a key role in synaptic plasticity, synaptogenesis, excitotoxicity, memory acquisition and learning. It mediates neuronal functions in glutamate neurotransmission. Is involved in the cell surface targeting of NMDA receptors. Plays a role in associative learning and in long-term memory consolidation. This chain is Glutamate [NMDA] receptor subunit 1, found in Drosophila willistoni (Fruit fly).